Reading from the N-terminus, the 328-residue chain is Cell division protein ZipA (328 aa).

Residues 1 to 4 lie on the Periplasmic side of the membrane; sequence MDLN. A helical transmembrane segment spans residues 5-25; the sequence is TILIIVGIVALVALIVHGLWS. The Cytoplasmic segment spans residues 26-328; it reads NRREKSKYFD…NAEQAYLARV (303 aa). The disordered stretch occupies residues 44–82; it reads SLTSRSHTQEEMVQPNNISPNTYVENGHTPISQPTTEKL. A compositionally biased stretch (polar residues) spans 57 to 81; that stretch reads QPNNISPNTYVENGHTPISQPTTEK.

This sequence belongs to the ZipA family. Interacts with FtsZ via their C-terminal domains.

Its subcellular location is the cell inner membrane. Functionally, essential cell division protein that stabilizes the FtsZ protofilaments by cross-linking them and that serves as a cytoplasmic membrane anchor for the Z ring. Also required for the recruitment to the septal ring of downstream cell division proteins. The protein is Cell division protein ZipA of Haemophilus influenzae (strain PittGG).